The sequence spans 324 residues: tRNA uridine(34) hydroxylase (324 aa).

A Rhodanese domain is found at 122–218 (QENRCLILDV…YGQQVGTGKW (97 aa)). The Cysteine persulfide intermediate role is filled by Cys-178.

This sequence belongs to the TrhO family.

It carries out the reaction uridine(34) in tRNA + AH2 + O2 = 5-hydroxyuridine(34) in tRNA + A + H2O. Functionally, catalyzes oxygen-dependent 5-hydroxyuridine (ho5U) modification at position 34 in tRNAs. The protein is tRNA uridine(34) hydroxylase of Chlamydia pneumoniae (Chlamydophila pneumoniae).